The primary structure comprises 727 residues: 1,4-alpha-glucan branching enzyme GlgB (727 aa).

Asp-405 acts as the Nucleophile in catalysis. Catalysis depends on Glu-458, which acts as the Proton donor.

It belongs to the glycosyl hydrolase 13 family. GlgB subfamily. Monomer.

The enzyme catalyses Transfers a segment of a (1-&gt;4)-alpha-D-glucan chain to a primary hydroxy group in a similar glucan chain.. It functions in the pathway glycan biosynthesis; glycogen biosynthesis. In terms of biological role, catalyzes the formation of the alpha-1,6-glucosidic linkages in glycogen by scission of a 1,4-alpha-linked oligosaccharide from growing alpha-1,4-glucan chains and the subsequent attachment of the oligosaccharide to the alpha-1,6 position. In Yersinia pseudotuberculosis serotype O:1b (strain IP 31758), this protein is 1,4-alpha-glucan branching enzyme GlgB.